Here is a 476-residue protein sequence, read N- to C-terminus: Proline--tRNA ligase 2 (476 aa).

It belongs to the class-II aminoacyl-tRNA synthetase family. ProS type 3 subfamily. In terms of assembly, homodimer.

The protein localises to the cytoplasm. The catalysed reaction is tRNA(Pro) + L-proline + ATP = L-prolyl-tRNA(Pro) + AMP + diphosphate. In terms of biological role, catalyzes the attachment of proline to tRNA(Pro) in a two-step reaction: proline is first activated by ATP to form Pro-AMP and then transferred to the acceptor end of tRNA(Pro). This chain is Proline--tRNA ligase 2, found in Bacillus cereus (strain ATCC 14579 / DSM 31 / CCUG 7414 / JCM 2152 / NBRC 15305 / NCIMB 9373 / NCTC 2599 / NRRL B-3711).